We begin with the raw amino-acid sequence, 1110 residues long: Serine/threonine-protein kinase PknK (1110 aa).

A Protein kinase domain is found at 26-283; the sequence is FDNVEEIGRG…TAADVGEELR (258 aa). ATP-binding positions include 32 to 40 and lysine 55; that span reads IGRGGFGVV. Catalysis depends on aspartate 149, which acts as the Proton acceptor. Residues asparagine 154 and aspartate 167 each contribute to the Mg(2+) site. Threonine 179 and threonine 181 each carry phosphothreonine; by autocatalysis. Residues 308 to 343 form a disordered region; sequence RSPEAHAAHRHTGGGTPTVPTPPTPATKYRPSVPTG.

This sequence belongs to the protein kinase superfamily. Ser/Thr protein kinase family. In terms of assembly, forms oligomeric complexes in solution. Can autophosphorylate the carboxyl terminal region in addition to Thr-179 and Thr-181.

It is found in the cytoplasm. The protein resides in the cell membrane. The protein localises to the secreted. It localises to the cell wall. The enzyme catalyses L-seryl-[protein] + ATP = O-phospho-L-seryl-[protein] + ADP + H(+). It catalyses the reaction L-threonyl-[protein] + ATP = O-phospho-L-threonyl-[protein] + ADP + H(+). In terms of biological role, key microbial factor involved in regulation of early and late events in tuberculosis infection, and in host-pathogen interactions. The chain is Serine/threonine-protein kinase PknK (pknK) from Mycobacterium tuberculosis (strain CDC 1551 / Oshkosh).